We begin with the raw amino-acid sequence, 283 residues long: Bis(5'-nucleosyl)-tetraphosphatase, symmetrical (283 aa).

It belongs to the Ap4A hydrolase family.

It carries out the reaction P(1),P(4)-bis(5'-adenosyl) tetraphosphate + H2O = 2 ADP + 2 H(+). Its function is as follows. Hydrolyzes diadenosine 5',5'''-P1,P4-tetraphosphate to yield ADP. The sequence is that of Bis(5'-nucleosyl)-tetraphosphatase, symmetrical from Pseudomonas paraeruginosa (strain DSM 24068 / PA7) (Pseudomonas aeruginosa (strain PA7)).